Reading from the N-terminus, the 272-residue chain is Sugar-phosphatase AraL (272 aa).

The protein belongs to the HAD-like hydrolase superfamily. The cofactor is Mg(2+).

The catalysed reaction is sugar phosphate + H2O = sugar + phosphate.. The enzyme catalyses O-phospho-L-serine + H2O = L-serine + phosphate. It catalyses the reaction O-phospho-D-serine + H2O = D-serine + phosphate. Functionally, catalyzes the dephosphorylation of C5 and C6 carbon sugars in vitro. Catalyzes the dephosphorylation of 3'-AMP and phosphoserine in vitro. This Bacillus subtilis (strain 168) protein is Sugar-phosphatase AraL (araL).